We begin with the raw amino-acid sequence, 574 residues long: MGNTCCVAPATTDEVGAPPRDHHHAAKKSPAPSATTTTATRQRHGQEPKPKPKPRARAKPNPYDWAPPRVLPARGGAAASAVRVLEGVVPHHPRLRVTDKYQLGRELGRGEFGVTHLATDRATRERLACKSIPKRRLRTAVDVADVRREVAIMASLPDHPALVRLRAAYEDADAVHLVMELCDGGELFDRIVARGRYTERAAAAAARTVAEVVRACHAHGVMHRDLKPENFLYAGKAEDAQLKAIDFGLSVFFRPGERFREIVGSPYYMAPEVLRRDYGPEVDIWSAGVILYILLCGVPPFWAETEQGVARAILRGAADFDREPWPRISRAAKSLVRQMLDVDPRRRPTAQQVLDHPWLHHAARAPNVPLGDVVRARLKQFSLMNRLKKKAMRVIAEHLSVEEVEVIKDMFALMDTDNNGRVTLQELKDGLTKVGSKLAEPEMELLMEAADVDGNGYLDYGEFVAVTIHLQRLSNDNHLRTAFLFFDKDGSGYIDRAELADALADDSGHADDAVLDHILREVDTDKDGRISYEEFVAMMKSGTDWRKASRQYSRERFKTLSNSLIKDGSITMAR.

A disordered region spans residues 1 to 64 (MGNTCCVAPA…RARAKPNPYD (64 aa)). A lipid anchor (N-myristoyl glycine) is attached at Gly-2. Residues 28–40 (KSPAPSATTTTAT) show a composition bias toward low complexity. The Protein kinase domain maps to 101–359 (YQLGRELGRG…AQQVLDHPWL (259 aa)). Residues 107-115 (LGRGEFGVT) and Lys-130 each bind ATP. Asp-225 acts as the Proton acceptor in catalysis. The autoinhibitory domain stretch occupies residues 365–395 (APNVPLGDVVRARLKQFSLMNRLKKKAMRVI). 4 consecutive EF-hand domains span residues 402–437 (EEVE…VGSK), 438–473 (LAEP…LQRL), 474–509 (SNDN…DSGH), and 510–545 (ADDA…GTDW). Ca(2+) is bound by residues Asp-415, Asp-417, Asn-419, Arg-421, Glu-426, Asp-451, Asp-453, Asn-455, Tyr-457, Glu-462, Asp-487, Asp-489, Ser-491, Tyr-493, Glu-498, Asp-523, Asp-525, Asp-527, Arg-529, and Glu-534.

The protein belongs to the protein kinase superfamily. Ser/Thr protein kinase family. CDPK subfamily. Expressed in leaf blades and stems. Expressed at low levels in anthers and spikelets.

The protein resides in the membrane. The catalysed reaction is L-seryl-[protein] + ATP = O-phospho-L-seryl-[protein] + ADP + H(+). The enzyme catalyses L-threonyl-[protein] + ATP = O-phospho-L-threonyl-[protein] + ADP + H(+). With respect to regulation, activated by calcium. Autophosphorylation may play an important role in the regulation of the kinase activity. Functionally, may play a role in signal transduction pathways that involve calcium as a second messenger. Functions in signal transduction pathways that positively regulate responses to drought, osmotic, and dehydration stress. Regulates expression of stress-associated genes in response to drought. Involved in tolerance to drought stress by increasing proline and soluble sugars, and improving stomatal closure. Required for pollen maturation and spikelet fertility. The polypeptide is Calcium-dependent protein kinase 9 (Oryza sativa subsp. japonica (Rice)).